The following is a 648-amino-acid chain: Biosynthetic arginine decarboxylase (648 aa).

The residue at position 109 (Lys109) is an N6-(pyridoxal phosphate)lysine. Residue 291-301 coordinates substrate; sequence IDVGGGLGIDF.

It belongs to the Orn/Lys/Arg decarboxylase class-II family. SpeA subfamily. The cofactor is Mg(2+). Requires pyridoxal 5'-phosphate as cofactor.

It catalyses the reaction L-arginine + H(+) = agmatine + CO2. It functions in the pathway amine and polyamine biosynthesis; agmatine biosynthesis; agmatine from L-arginine: step 1/1. In terms of biological role, catalyzes the biosynthesis of agmatine from arginine. This chain is Biosynthetic arginine decarboxylase, found in Prochlorococcus marinus (strain MIT 9301).